A 920-amino-acid chain; its full sequence is Neurofibromin-A (920 aa).

A Ras-GAP domain is found at 63–291 (NKTLPLIKDL…EKMSAYFNLI (229 aa)). Disordered regions lie at residues 344-405 (KWLA…TTTA) and 477-508 (LGPS…GASM). The segment covering 346 to 369 (LATTPSGNTPSPAISNASSAHNGK) has biased composition (polar residues). Residues 370–405 (SNNTTNNNNNNNNNNNNNNNNNNNNNNNSNKTTTTA) show a composition bias toward low complexity. Residues 498 to 507 (PTTSLQNGAS) are compositionally biased toward polar residues. The 162-residue stretch at 512-673 (FDECTHMLER…TSKDFITKSY (162 aa)) folds into the CRAL-TRIO domain.

Its function is as follows. Regulator of the GTPase activity of Ras, mainly RasG and RasB. This Dictyostelium discoideum (Social amoeba) protein is Neurofibromin-A (nfaA).